We begin with the raw amino-acid sequence, 153 residues long: uncharacterized protein (153 aa).

The interval 16–40 (DEQTPLLNNDGIQRTPPSAEADMSL) is disordered. Residues 20 to 31 (PLLNNDGIQRTP) show a composition bias toward polar residues.

This is an uncharacterized protein from Schizosaccharomyces pombe (strain 972 / ATCC 24843) (Fission yeast).